Consider the following 237-residue polypeptide: D-aminoacyl-tRNA deacylase (237 aa).

The protein belongs to the DtdA deacylase family. As to quaternary structure, monomer. It depends on Zn(2+) as a cofactor.

It carries out the reaction a D-aminoacyl-tRNA + H2O = a tRNA + a D-alpha-amino acid + H(+). It catalyses the reaction glycyl-tRNA(Ala) + H2O = tRNA(Ala) + glycine + H(+). D-aminoacyl-tRNA deacylase with broad substrate specificity. By recycling D-aminoacyl-tRNA to D-amino acids and free tRNA molecules, this enzyme counteracts the toxicity associated with the formation of D-aminoacyl-tRNA entities in vivo. The chain is D-aminoacyl-tRNA deacylase from Metallosphaera sedula (strain ATCC 51363 / DSM 5348 / JCM 9185 / NBRC 15509 / TH2).